A 338-amino-acid polypeptide reads, in one-letter code: Anthocyanidin reductase ((2S)-flavan-3-ol-forming) (338 aa).

Residues 18–21 (TGFV), Lys48, 87–90 (VATP), and Tyr168 contribute to the NADP(+) site.

The protein belongs to the NAD(P)-dependent epimerase/dehydratase family. Dihydroflavonol-4-reductase subfamily. Expressed in leaves and grape berries.

The catalysed reaction is a (2S,3R)-flavan-3-ol + 2 NADP(+) = an anthocyanidin with a 3-hydroxy group + 2 NADPH + 2 H(+). It catalyses the reaction a (2S,3S)-flavan-3-ol + 2 NADP(+) = an anthocyanidin with a 3-hydroxy group + 2 NADPH + 2 H(+). It participates in secondary metabolite biosynthesis; flavonoid biosynthesis. Produces the terminal flavan-3-ol monomers required for the formation of proanthocyanidins or condensed tannins in leaves and flowers, as well as in the skin and seeds of developing berries. Behaves as a reductase and as a C-3 epimerase. Catalyzes the double reduction of anthocyanidins, producing a mixture of (2S,3S)- and (2S,3R)-flavan-3-ols. The enzyme catalyzes sequential hydride transfers to C-2 and C-4, respectively and epimerization at C-3 is achieved by tautomerization that occurs between the two hydride transfers. Converts cyanidin, pelargonidin and delphinidin into catechin and epicatechin, afzelechin and epiafzelechin, and gallocatechin and epigallocatechin respectively. The chain is Anthocyanidin reductase ((2S)-flavan-3-ol-forming) from Vitis vinifera (Grape).